Reading from the N-terminus, the 66-residue chain is Sodium/potassium-transporting ATPase subunit gamma (66 aa).

A helical membrane pass occupies residues 29 to 46 (GGLIFAGLAFVVGLLILL).

Belongs to the FXYD family. As to quaternary structure, regulatory subunit of the sodium/potassium-transporting ATPase which is composed of a catalytic alpha subunit, an auxiliary non-catalytic beta subunit and an additional regulatory subunit. As to expression, highest levels expressed in the kidney and spleen. Restricted to the basolateral membrane in renal epithelial cells and varies in its level of expression along the nephron.

Its subcellular location is the membrane. In terms of biological role, may be involved in forming the receptor site for cardiac glycoside binding or may modulate the transport function of the sodium ATPase. This is Sodium/potassium-transporting ATPase subunit gamma (Fxyd2) from Rattus norvegicus (Rat).